The following is a 443-amino-acid chain: Exodeoxyribonuclease 7 large subunit (443 aa).

Belongs to the XseA family. In terms of assembly, heterooligomer composed of large and small subunits.

The protein localises to the cytoplasm. It catalyses the reaction Exonucleolytic cleavage in either 5'- to 3'- or 3'- to 5'-direction to yield nucleoside 5'-phosphates.. Its function is as follows. Bidirectionally degrades single-stranded DNA into large acid-insoluble oligonucleotides, which are then degraded further into small acid-soluble oligonucleotides. This is Exodeoxyribonuclease 7 large subunit from Vibrio vulnificus (strain YJ016).